A 541-amino-acid polypeptide reads, in one-letter code: Chaperonin GroEL (541 aa).

Residues 29–32 (TIGP), 86–90 (DGTTT), glycine 413, and aspartate 494 each bind ATP.

The protein belongs to the chaperonin (HSP60) family. Forms a cylinder of 14 subunits composed of two heptameric rings stacked back-to-back. Interacts with the co-chaperonin GroES.

The protein localises to the cytoplasm. The enzyme catalyses ATP + H2O + a folded polypeptide = ADP + phosphate + an unfolded polypeptide.. Together with its co-chaperonin GroES, plays an essential role in assisting protein folding. The GroEL-GroES system forms a nano-cage that allows encapsulation of the non-native substrate proteins and provides a physical environment optimized to promote and accelerate protein folding. This is Chaperonin GroEL from Lachnospira eligens (strain ATCC 27750 / DSM 3376 / VPI C15-48 / C15-B4) (Eubacterium eligens).